The chain runs to 63 residues: Large ribosomal subunit protein bL28 (63 aa).

It belongs to the bacterial ribosomal protein bL28 family.

The chain is Large ribosomal subunit protein bL28 from Beutenbergia cavernae (strain ATCC BAA-8 / DSM 12333 / CCUG 43141 / JCM 11478 / NBRC 16432 / NCIMB 13614 / HKI 0122).